The chain runs to 96 residues: Putative pterin-4-alpha-carbinolamine dehydratase (96 aa).

It belongs to the pterin-4-alpha-carbinolamine dehydratase family.

The enzyme catalyses (4aS,6R)-4a-hydroxy-L-erythro-5,6,7,8-tetrahydrobiopterin = (6R)-L-erythro-6,7-dihydrobiopterin + H2O. The chain is Putative pterin-4-alpha-carbinolamine dehydratase from Prochlorococcus marinus (strain SARG / CCMP1375 / SS120).